The primary structure comprises 306 residues: NAD kinase 1 (306 aa).

D67 functions as the Proton acceptor in the catalytic mechanism. NAD(+) contacts are provided by residues 67–68 (DG), 149–150 (NE), D181, and 192–197 (TGYTVS).

The protein belongs to the NAD kinase family. Requires a divalent metal cation as cofactor.

It localises to the cytoplasm. It catalyses the reaction NAD(+) + ATP = ADP + NADP(+) + H(+). In terms of biological role, involved in the regulation of the intracellular balance of NAD and NADP, and is a key enzyme in the biosynthesis of NADP. Catalyzes specifically the phosphorylation on 2'-hydroxyl of the adenosine moiety of NAD to yield NADP. The chain is NAD kinase 1 from Trichormus variabilis (strain ATCC 29413 / PCC 7937) (Anabaena variabilis).